A 456-amino-acid chain; its full sequence is Bacteriochlorophyllide d C-12(1)-methyltransferase (456 aa).

The region spanning 178–405 (HAKKYSQLIP…MFEPKKLGGE (228 aa)) is the Radical SAM core domain. [4Fe-4S] cluster is bound by residues C194, C198, and C201.

Belongs to the radical SAM superfamily. [4Fe-4S] cluster serves as cofactor.

It localises to the cytoplasm. The enzyme catalyses 8-ethyl-12-methyl-3-vinylbacteriochlorophyllide d + S-adenosyl-L-methionine = 8,12-diethyl-3-vinylbacteriochlorophyllide d + S-adenosyl-L-homocysteine + H(+). It functions in the pathway porphyrin-containing compound metabolism; bacteriochlorophyll biosynthesis (light-independent). In terms of biological role, involved in the biosynthesis of the major light-harvesting pigment bacteriochlorophyll c (BChlc), which confers a significant competitive advantage to green sulfur bacteria living at limiting red and near-infrared light intensities. BchR is a methyltransferase that adds a single methyl group to the methyl carbon at the C-12(1) position of 8-ethyl-12-methyl-3-vinylbacteriochlorophyllide d to yield 8,12-diethyl-3-vinylbacteriochlorophyllide d. This is Bacteriochlorophyllide d C-12(1)-methyltransferase from Chlorobaculum tepidum (strain ATCC 49652 / DSM 12025 / NBRC 103806 / TLS) (Chlorobium tepidum).